A 324-amino-acid chain; its full sequence is MAVGRNNTIVTKFILLGLSDHPQMKIFLFMLFLGLYLLTLAWNLSLIALIKMDSHLHMPMYFFLSNLSFLDICYVSSTAPKMLSDIITEQKTISFVGCATQYFVFCGMGLTECFLLAAMAYDRYAAICNPLLYTVLISHTLCLKMVVGAYVGGFLSSFIETYSVYQHDFCGPYMINHFFCDLPPVLALSCSDTFTSEVVTFIVSVVVGIVSVLVVLISYGYIVAAVVKISSATGRTKAFSTCASHLTAVTLFYGSGFFMYMRPSSSYSLNRDKVVSIFYALVIPVVNPIIYSFRNKEIKNAMRKAMERDPGISHGGPFIFMTLG.

Topologically, residues 1-26 (MAVGRNNTIVTKFILLGLSDHPQMKI) are extracellular. N-linked (GlcNAc...) asparagine glycosylation occurs at asparagine 6. Residues 27–47 (FLFMLFLGLYLLTLAWNLSLI) form a helical membrane-spanning segment. The Cytoplasmic segment spans residues 48-55 (ALIKMDSH). Residues 56–76 (LHMPMYFFLSNLSFLDICYVS) traverse the membrane as a helical segment. Topologically, residues 77–100 (STAPKMLSDIITEQKTISFVGCAT) are extracellular. Cysteine 98 and cysteine 190 are oxidised to a cystine. A helical membrane pass occupies residues 101–121 (QYFVFCGMGLTECFLLAAMAY). The Cytoplasmic segment spans residues 122 to 134 (DRYAAICNPLLYT). A helical transmembrane segment spans residues 135 to 155 (VLISHTLCLKMVVGAYVGGFL). The Extracellular segment spans residues 156 to 197 (SSFIETYSVYQHDFCGPYMINHFFCDLPPVLALSCSDTFTSE). The chain crosses the membrane as a helical span at residues 198 to 218 (VVTFIVSVVVGIVSVLVVLIS). At 219–238 (YGYIVAAVVKISSATGRTKA) the chain is on the cytoplasmic side. Residues 239-259 (FSTCASHLTAVTLFYGSGFFM) traverse the membrane as a helical segment. Over 260–272 (YMRPSSSYSLNRD) the chain is Extracellular. Residues 273 to 293 (KVVSIFYALVIPVVNPIIYSF) form a helical membrane-spanning segment. Over 294–324 (RNKEIKNAMRKAMERDPGISHGGPFIFMTLG) the chain is Cytoplasmic.

Belongs to the G-protein coupled receptor 1 family.

The protein resides in the cell membrane. Its function is as follows. Odorant receptor. This Homo sapiens (Human) protein is Olfactory receptor 5A2 (OR5A2).